Consider the following 61-residue polypeptide: Large ribosomal subunit protein eL37 (61 aa).

Zn(2+) is bound by residues Cys-19, Cys-22, Cys-34, and Cys-37. The C4-type zinc-finger motif lies at Cys-19 to Cys-37.

This sequence belongs to the eukaryotic ribosomal protein eL37 family. The cofactor is Zn(2+).

Functionally, binds to the 23S rRNA. This is Large ribosomal subunit protein eL37 (rpl37e) from Sulfurisphaera tokodaii (strain DSM 16993 / JCM 10545 / NBRC 100140 / 7) (Sulfolobus tokodaii).